Consider the following 129-residue polypeptide: uncharacterized protein (129 aa).

A helical membrane pass occupies residues 8–24 (YLILFITIIAICSLFRI).

The protein resides in the membrane. This is an uncharacterized protein from Rickettsia prowazekii (strain Madrid E).